The sequence spans 459 residues: tRNA modification GTPase MnmE (459 aa).

(6S)-5-formyl-5,6,7,8-tetrahydrofolate-binding residues include Arg22, Glu85, and Arg124. In terms of domain architecture, TrmE-type G spans 221–380; it reads GLSTVIVGKP…LEIQIRDLFF (160 aa). Asn231 contacts K(+). Residues 231–236, 250–256, and 275–278 contribute to the GTP site; these read NVGKSS, TEVAGTT, and DTAG. Ser235 contributes to the Mg(2+) binding site. Residues Thr250, Val252, and Thr255 each contribute to the K(+) site. Thr256 is a Mg(2+) binding site. Lys459 contacts (6S)-5-formyl-5,6,7,8-tetrahydrofolate.

The protein belongs to the TRAFAC class TrmE-Era-EngA-EngB-Septin-like GTPase superfamily. TrmE GTPase family. As to quaternary structure, homodimer. Heterotetramer of two MnmE and two MnmG subunits. Requires K(+) as cofactor.

It localises to the cytoplasm. Functionally, exhibits a very high intrinsic GTPase hydrolysis rate. Involved in the addition of a carboxymethylaminomethyl (cmnm) group at the wobble position (U34) of certain tRNAs, forming tRNA-cmnm(5)s(2)U34. The sequence is that of tRNA modification GTPase MnmE from Staphylococcus aureus (strain MSSA476).